Consider the following 475-residue polypeptide: UDP-N-acetylmuramate--L-alanine ligase (475 aa).

112–118 serves as a coordination point for ATP; the sequence is GTHGKTT.

Belongs to the MurCDEF family.

The protein localises to the cytoplasm. It carries out the reaction UDP-N-acetyl-alpha-D-muramate + L-alanine + ATP = UDP-N-acetyl-alpha-D-muramoyl-L-alanine + ADP + phosphate + H(+). The protein operates within cell wall biogenesis; peptidoglycan biosynthesis. In terms of biological role, cell wall formation. The protein is UDP-N-acetylmuramate--L-alanine ligase of Methylobacillus flagellatus (strain ATCC 51484 / DSM 6875 / VKM B-1610 / KT).